A 220-amino-acid polypeptide reads, in one-letter code: Ribonuclease P protein subunit p29 (220 aa).

Ser10 bears the Phosphoserine mark.

It belongs to the eukaryotic/archaeal RNase P protein component 1 family. In terms of assembly, component of nuclear RNase P and RNase MRP ribonucleoproteins. RNase P consists of a catalytic RNA moiety and 10 different protein chains; POP1, POP4, POP5, POP7, RPP14, RPP21, RPP25, RPP30, RPP38 and RPP40. Within the RNase P complex, POP1, POP7 and RPP25 form the 'finger' subcomplex, POP5, RPP14, RPP40 and homodimeric RPP30 form the 'palm' subcomplex, and RPP21, POP4 and RPP38 form the 'wrist' subcomplex. All subunits of the RNase P complex interact with the catalytic RNA. Several subunits of RNase P are also part of the RNase MRP complex. RNase MRP consists of a catalytic RNA moiety and about 8 protein subunits; POP1, POP7, RPP25, RPP30, RPP38, RPP40 and possibly also POP4 and POP5.

Its subcellular location is the nucleus. It localises to the nucleolus. Functionally, component of ribonuclease P, a ribonucleoprotein complex that generates mature tRNA molecules by cleaving their 5'-ends. This Homo sapiens (Human) protein is Ribonuclease P protein subunit p29 (POP4).